The primary structure comprises 199 residues: Holliday junction branch migration complex subunit RuvA (199 aa).

The segment at 1-63 (MYEYLTGLVT…EDNISLFGFT (63 aa)) is domain I. Residues 64–142 (DQNEKNLFMQ…NESSSSLFAT (79 aa)) are domain II. Positions 143 to 149 (TQLTVDA) are flexible linker. Residues 150–199 (TVNRELKDALEALAALGYKERDIKKVQKALMKEEQMATDEYLRQALRLLN) form a domain III region.

It belongs to the RuvA family. As to quaternary structure, homotetramer. Forms an RuvA(8)-RuvB(12)-Holliday junction (HJ) complex. HJ DNA is sandwiched between 2 RuvA tetramers; dsDNA enters through RuvA and exits via RuvB. An RuvB hexamer assembles on each DNA strand where it exits the tetramer. Each RuvB hexamer is contacted by two RuvA subunits (via domain III) on 2 adjacent RuvB subunits; this complex drives branch migration. In the full resolvosome a probable DNA-RuvA(4)-RuvB(12)-RuvC(2) complex forms which resolves the HJ.

It localises to the cytoplasm. Its function is as follows. The RuvA-RuvB-RuvC complex processes Holliday junction (HJ) DNA during genetic recombination and DNA repair, while the RuvA-RuvB complex plays an important role in the rescue of blocked DNA replication forks via replication fork reversal (RFR). RuvA specifically binds to HJ cruciform DNA, conferring on it an open structure. The RuvB hexamer acts as an ATP-dependent pump, pulling dsDNA into and through the RuvAB complex. HJ branch migration allows RuvC to scan DNA until it finds its consensus sequence, where it cleaves and resolves the cruciform DNA. In Limosilactobacillus reuteri subsp. reuteri (strain JCM 1112) (Lactobacillus reuteri), this protein is Holliday junction branch migration complex subunit RuvA.